We begin with the raw amino-acid sequence, 865 residues long: SWI/SNF chromatin-remodeling complex subunit sol1 (865 aa).

Disordered regions lie at residues 1 to 34 (MNNQ…QPAY), 54 to 92 (MMNT…ASNG), 116 to 143 (QEKE…QSRE), and 163 to 183 (VRQT…ANQL). The span at 17–30 (SYPTQGQSYNTQEE) shows a compositional bias: polar residues. A compositionally biased stretch (low complexity) spans 121 to 139 (AMQQQQQQQQQQQLYQRQM). The ARID domain occupies 188 to 278 (AASFDKFMVS…YLLPYEEAWL (91 aa)). Residues 288 to 380 (QQAKANHSAN…QTSSSAAPVD (93 aa)) form a disordered region. The span at 328 to 353 (HSKSPSPAFTANRFSPAAPTTVSSER) shows a compositional bias: polar residues. Over residues 356–368 (PPYPSAPTRPTPP) the composition is skewed to pro residues. Phosphoserine is present on residues S852 and S855.

This sequence belongs to the SWI1 family. In terms of assembly, component of the SWI/SNF global transcription activator complex composed of at least arp9, arp42, snf5, snf22, snf30, sbf59, sol1, ssr1, ssr2, ssr3, ssr4 and tfg3.

The protein resides in the nucleus. Functionally, component of the SWI/SNF complex, an ATP-dependent chromatin remodeling complex, required for the positive and negative regulation of gene expression of a large number of genes. It changes chromatin structure by altering DNA-histone contacts within a nucleosome, leading eventually to a change in nucleosome position, thus facilitating or repressing binding of gene-specific transcription factors. This Schizosaccharomyces pombe (strain 972 / ATCC 24843) (Fission yeast) protein is SWI/SNF chromatin-remodeling complex subunit sol1 (sol1).